The chain runs to 47 residues: Defensin-like protein 1 (47 aa).

Cystine bridges form between Cys-5-Cys-47, Cys-16-Cys-36, Cys-22-Cys-43, and Cys-26-Cys-45.

This sequence belongs to the DEFL family.

Fabatins have antibacterial activity against Gram-positive and Gram-negative bacteria. High activity against P.aeruginosa. No activity against S.cerevisiae and C.albicans. In Vicia faba (Broad bean), this protein is Defensin-like protein 1.